The primary structure comprises 255 residues: Geranylgeranylglyceryl phosphate synthase (255 aa).

The Mg(2+) site is built by Asp-34 and Thr-64. Residues 182-188 (YLEAGSG), 213-214 (GG), and 235-236 (GN) each bind sn-glycerol 1-phosphate.

The protein belongs to the GGGP/HepGP synthase family. Group II subfamily. Mg(2+) serves as cofactor.

The protein resides in the cytoplasm. It catalyses the reaction sn-glycerol 1-phosphate + (2E,6E,10E)-geranylgeranyl diphosphate = sn-3-O-(geranylgeranyl)glycerol 1-phosphate + diphosphate. Its pathway is membrane lipid metabolism; glycerophospholipid metabolism. Functionally, prenyltransferase that catalyzes the transfer of the geranylgeranyl moiety of geranylgeranyl diphosphate (GGPP) to the C3 hydroxyl of sn-glycerol-1-phosphate (G1P). This reaction is the first ether-bond-formation step in the biosynthesis of archaeal membrane lipids. The protein is Geranylgeranylglyceryl phosphate synthase of Saccharolobus islandicus (strain M.14.25 / Kamchatka #1) (Sulfolobus islandicus).